Reading from the N-terminus, the 459-residue chain is Putrescine aminotransferase (459 aa).

Residues 150-151 (GT) and Q274 each bind pyridoxal 5'-phosphate. At K300 the chain carries N6-(pyridoxal phosphate)lysine. T332 is a binding site for pyridoxal 5'-phosphate.

Belongs to the class-III pyridoxal-phosphate-dependent aminotransferase family. Putrescine aminotransferase subfamily. Pyridoxal 5'-phosphate is required as a cofactor.

The catalysed reaction is an alkane-alpha,omega-diamine + 2-oxoglutarate = an omega-aminoaldehyde + L-glutamate. It catalyses the reaction putrescine + 2-oxoglutarate = 1-pyrroline + L-glutamate + H2O. The enzyme catalyses cadaverine + 2-oxoglutarate = 5-aminopentanal + L-glutamate. It participates in amine and polyamine degradation; putrescine degradation; 4-aminobutanal from putrescine (transaminase route): step 1/1. Catalyzes the aminotransferase reaction from putrescine to 2-oxoglutarate, leading to glutamate and 4-aminobutanal, which spontaneously cyclizes to form 1-pyrroline. This is the first step in one of two pathways for putrescine degradation, where putrescine is converted into 4-aminobutanoate (gamma-aminobutyrate or GABA) via 4-aminobutanal. Also functions as a cadaverine transaminase in a a L-lysine degradation pathway to succinate that proceeds via cadaverine, glutarate and L-2-hydroxyglutarate. The sequence is that of Putrescine aminotransferase from Escherichia coli (strain K12 / MC4100 / BW2952).